The following is a 669-amino-acid chain: Thrombospondin-type laminin G domain and EAR repeat-containing protein (669 aa).

The signal sequence occupies residues methionine 1–glycine 19. One can recognise a Laminin G-like domain in the interval glycine 58–cysteine 277. EAR repeat units lie at residues aspartate 313–glutamate 358, lysine 360–histidine 408, lysine 412–proline 460, leucine 464–histidine 506, serine 514–valine 570, alanine 574–glycine 622, and glycine 625–threonine 668. An N-linked (GlcNAc...) asparagine glycan is attached at asparagine 320. N-linked (GlcNAc...) asparagine glycosylation is found at asparagine 468, asparagine 497, asparagine 556, and asparagine 569.

The protein resides in the secreted. The protein localises to the cell surface. It is found in the cell projection. Its subcellular location is the stereocilium. In terms of biological role, plays a critical role in tooth and hair follicle morphogenesis through regulation of the Notch signaling pathway. May play a role in development or function of the auditory system. This chain is Thrombospondin-type laminin G domain and EAR repeat-containing protein (TSPEAR), found in Homo sapiens (Human).